The chain runs to 304 residues: MHIRILGSAAGGGFPQWNCNCRNCRGVRDGSVAAQPRTQSSIALSDEGERWILCNASPDIRAQIAAFPALQPARRPRDTAIGAIVLLDSQIDHTTGLLSLREGCPHEVWCTQMVHQDLSEGFPLFPMLSHWNGGLRHRPIALDGEPFAIPACPRLRFTAIPLRSSAPPYSPHRGDPHPGDNIGLFVEDLDSAGTLFYAPGLGEVDEALLEWMRRADCLLVDGTLWRDDEMLVCEVGDKLGRQMGHLAQSGPGGMLEVLAKVPAARKVLIHINNTNPILDTASAERAELDASGIEVAWDGMHIQL.

This sequence belongs to the PqqB family.

It participates in cofactor biosynthesis; pyrroloquinoline quinone biosynthesis. In terms of biological role, may be involved in the transport of PQQ or its precursor to the periplasm. The polypeptide is Coenzyme PQQ synthesis protein B (Pseudomonas aeruginosa (strain LESB58)).